Here is a 517-residue protein sequence, read N- to C-terminus: MAVNLVLSFALAILISSSPTAVGVDATEELKEAVLTLDAGNFSEVVAKHPFIVVKFYAPWCGHCKQLAPEYEKAASILRKNELPVVLAKVDAYNERNKELKDKYGVYSYPTIKIMKNGGSDVRGYGGPREADGIVEYLKRQVGPASLKLESAEEAAHSVVDKGVILVGVFPEFAGMEYENFMVVAEKMRADYDFFHTSDASILPRGDQSVKGPIVRLFKPFDELFVDSEDFGKDALEKFIEVSGFPMVVTYDADPTNHKFLERYYSTPSSKAMLFVSFGDDRIESFKSQIHEAARKFSGNNISFLIGDVADADRVFQYFGLRESDVPLLFVIASTGKYLNPTMDPDQIIPWLKQYIVEYGNLTPYVKSEPIPKVNDQPVKVVVADNIDDIVFNSGKNVLLEFYAPWCGHCRKFALILEEIAVSLQDDQDIVIAKMDGTVNDIPTDFTVEGYPTIYFYSSSGNLLSYDGARTAEEIISFINENRGPKAGAAAAVDEKTQIDAVEEEVTSSSEPVKDEL.

An N-terminal signal peptide occupies residues 1–23 (MAVNLVLSFALAILISSSPTAVG). Positions 24 to 143 (VDATEELKEA…IVEYLKRQVG (120 aa)) constitute a Thioredoxin 1 domain. The N-linked (GlcNAc...) asparagine glycan is linked to Asn41. Catalysis depends on nucleophile residues Cys61 and Cys64. Cysteines 61 and 64 form a disulfide. Asn301 is a glycosylation site (N-linked (GlcNAc...) asparagine). The 128-residue stretch at 357–484 (VEYGNLTPYV…IISFINENRG (128 aa)) folds into the Thioredoxin 2 domain. Catalysis depends on nucleophile residues Cys407 and Cys410. Cys407 and Cys410 are joined by a disulfide. The short motif at 514–517 (KDEL) is the Prevents secretion from ER element.

Belongs to the protein disulfide isomerase family.

Its subcellular location is the endoplasmic reticulum lumen. It catalyses the reaction Catalyzes the rearrangement of -S-S- bonds in proteins.. Its function is as follows. Acts as a protein-folding catalyst that interacts with nascent polypeptides to catalyze the formation, isomerization, and reduction or oxidation of disulfide bonds. May play a role in storage protein biogenesis. In Oryza sativa subsp. japonica (Rice), this protein is Protein disulfide isomerase-like 1-2 (PDIL1-2).